The primary structure comprises 353 residues: Photosystem II D2 protein (353 aa).

Threonine 2 carries the post-translational modification N-acetylthreonine. Threonine 2 bears the Phosphothreonine mark. A helical transmembrane segment spans residues 41-61 (CAYFAVGGWFTGTTFVTSWYT). A chlorophyll a-binding site is contributed by histidine 118. A helical transmembrane segment spans residues 125–141 (GFMLRQFELARSVQLRP). Residues glutamine 130 and asparagine 143 each contribute to the pheophytin a site. The chain crosses the membrane as a helical span at residues 153–166 (VFVSVFLIYPLGQS). Residue histidine 198 coordinates chlorophyll a. A helical membrane pass occupies residues 208-228 (AALLCAIHGATVENTLFEDGD). A plastoquinone contacts are provided by histidine 215 and phenylalanine 262. Position 215 (histidine 215) interacts with Fe cation. Histidine 269 provides a ligand contact to Fe cation. A helical transmembrane segment spans residues 279–295 (GLWMSALGVVGLALNLR).

Belongs to the reaction center PufL/M/PsbA/D family. PSII is composed of 1 copy each of membrane proteins PsbA, PsbB, PsbC, PsbD, PsbE, PsbF, PsbH, PsbI, PsbJ, PsbK, PsbL, PsbM, PsbT, PsbX, PsbY, PsbZ, Psb30/Ycf12, at least 3 peripheral proteins of the oxygen-evolving complex and a large number of cofactors. It forms dimeric complexes. The D1/D2 heterodimer binds P680, chlorophylls that are the primary electron donor of PSII, and subsequent electron acceptors. It shares a non-heme iron and each subunit binds pheophytin, quinone, additional chlorophylls, carotenoids and lipids. There is also a Cl(-1) ion associated with D1 and D2, which is required for oxygen evolution. The PSII complex binds additional chlorophylls, carotenoids and specific lipids. serves as cofactor.

It is found in the plastid. Its subcellular location is the chloroplast thylakoid membrane. It carries out the reaction 2 a plastoquinone + 4 hnu + 2 H2O = 2 a plastoquinol + O2. Functionally, photosystem II (PSII) is a light-driven water:plastoquinone oxidoreductase that uses light energy to abstract electrons from H(2)O, generating O(2) and a proton gradient subsequently used for ATP formation. It consists of a core antenna complex that captures photons, and an electron transfer chain that converts photonic excitation into a charge separation. The D1/D2 (PsbA/PsbD) reaction center heterodimer binds P680, the primary electron donor of PSII as well as several subsequent electron acceptors. D2 is needed for assembly of a stable PSII complex. This Guizotia abyssinica (Niger) protein is Photosystem II D2 protein.